The sequence spans 832 residues: WD repeat-containing protein 75 (832 aa).

13 WD repeats span residues 4 to 43, 47 to 86, 90 to 134, 148 to 187, 196 to 233, 239 to 278, 281 to 320, 326 to 364, 378 to 425, 432 to 474, 485 to 523, 527 to 567, and 572 to 609; these read KTDI…KVYS, EEWL…KLWD, GILI…QLVA, KELS…YFFR, LKAT…RLWR, KEYT…VQWQ, DMSK…SIIE, SGLI…QFYS, QQEY…KLWA, SFVL…KAWC, YWSC…TLWS, WELL…CCWN, and ALEW…FVFK. 2 disordered regions span residues 704–723 and 759–811; these read QHKL…HTQG and VREE…AQER. Acidic residues predominate over residues 764-785; the sequence is DSSEQEMDSEKEEEESEEEMEA. Residues 799-811 show a composition bias toward basic and acidic residues; sequence DEQKPKLSKAQER.

As to quaternary structure, component of the proposed t-UTP subcomplex of the ribosomal small subunit (SSU) processome. SSU processome is composed of more than 70 proteins and the RNA chaperone small nucleolar RNA (snoRNA) U3.

It is found in the nucleus. Its subcellular location is the nucleolus. In terms of biological role, ribosome biogenesis factor. Part of the small subunit (SSU) processome, first precursor of the small eukaryotic ribosomal subunit. During the assembly of the SSU processome in the nucleolus, many ribosome biogenesis factors, an RNA chaperone and ribosomal proteins associate with the nascent pre-rRNA and work in concert to generate RNA folding, modifications, rearrangements and cleavage as well as targeted degradation of pre-ribosomal RNA by the RNA exosome. Involved in nucleolar processing of pre-18S ribosomal RNA. Required for optimal pre-ribosomal RNA transcription by RNA polymerase I. The protein is WD repeat-containing protein 75 (wdr75) of Danio rerio (Zebrafish).